A 476-amino-acid polypeptide reads, in one-letter code: Eukaryotic translation initiation factor 3 subunit L (476 aa).

One can recognise a PCI domain in the interval 257–452 (DAIRMFSHIL…DLDYALENDL (196 aa)).

The protein belongs to the eIF-3 subunit L family. As to quaternary structure, component of the eukaryotic translation initiation factor 3 (eIF-3) complex.

The protein localises to the cytoplasm. Its function is as follows. Component of the eukaryotic translation initiation factor 3 (eIF-3) complex, which is involved in protein synthesis of a specialized repertoire of mRNAs and, together with other initiation factors, stimulates binding of mRNA and methionyl-tRNAi to the 40S ribosome. The eIF-3 complex specifically targets and initiates translation of a subset of mRNAs involved in cell proliferation. This is Eukaryotic translation initiation factor 3 subunit L from Aspergillus clavatus (strain ATCC 1007 / CBS 513.65 / DSM 816 / NCTC 3887 / NRRL 1 / QM 1276 / 107).